Here is a 229-residue protein sequence, read N- to C-terminus: MSENSTPNNPVVPGAGADGPSLSDSASISGSDAVNLAAEQSKSTAHRNIPGLGDLPIPDDTANLREGPNLHDGLLALLPLVGVWRGEGQADTAEDGQYAFGQQITFAHDGENYLSFESRMWKLDEEGNPTGVDQRESGFWRINLKDEIEFVCTHAGGVVEIYYGQPLNERAWQLESASTMVTATGPSTLGPGKRLYGLLPTNELGWVDERLVGDALKPRMSAQLTRVIG.

A disordered region spans residues 1 to 54 (MSENSTPNNPVVPGAGADGPSLSDSASISGSDAVNLAAEQSKSTAHRNIPGLGD). The span at 18-33 (DGPSLSDSASISGSDA) shows a compositional bias: low complexity. The GXWXGXG signature appears at 82 to 88 (GVWRGEG).

This sequence belongs to the nitrobindin family.

The sequence is that of Ferric nitrobindin-like protein from Corynebacterium glutamicum (strain R).